The chain runs to 242 residues: Biosynthetic peptidoglycan transglycosylase (242 aa).

The helical transmembrane segment at 19–39 threads the bilayer; it reads LLLACAVLWGGGVALFSIVPV.

The protein belongs to the glycosyltransferase 51 family.

Its subcellular location is the cell inner membrane. The enzyme catalyses [GlcNAc-(1-&gt;4)-Mur2Ac(oyl-L-Ala-gamma-D-Glu-L-Lys-D-Ala-D-Ala)](n)-di-trans,octa-cis-undecaprenyl diphosphate + beta-D-GlcNAc-(1-&gt;4)-Mur2Ac(oyl-L-Ala-gamma-D-Glu-L-Lys-D-Ala-D-Ala)-di-trans,octa-cis-undecaprenyl diphosphate = [GlcNAc-(1-&gt;4)-Mur2Ac(oyl-L-Ala-gamma-D-Glu-L-Lys-D-Ala-D-Ala)](n+1)-di-trans,octa-cis-undecaprenyl diphosphate + di-trans,octa-cis-undecaprenyl diphosphate + H(+). It participates in cell wall biogenesis; peptidoglycan biosynthesis. Its function is as follows. Peptidoglycan polymerase that catalyzes glycan chain elongation from lipid-linked precursors. This chain is Biosynthetic peptidoglycan transglycosylase, found in Klebsiella oxytoca.